We begin with the raw amino-acid sequence, 321 residues long: MRALAALSAPPNERLLPRDPAATRDPDAARPARRSAVERLAADRAKYVRGRPGTGRGVASEGSGPGAIKCPGNDPGPPARAPAPVARRAIARKPLRPDSLIIYRQKCEFVRGSGADGPRASLVKKLFQGPGKDKAPVPRTGDEGKAGNPETVPTTPGPAADPAIPETPAPAARSAAPSSVPAAPPGPEPRVVRRRGLQRSQSDLSSRYSAALAESDTFFQYCGLDPEVVEALGRENFTAGSDCVTLKVRSVSVATSGSGFSRHSGGDDEGLQEEELIEQVPSTTSVIERNARIIKWLYTCKKAKETPSQEQSRTRGSKPSR.

Disordered regions lie at residues 1 to 84 (MRAL…APAP) and 111 to 203 (RGSG…SQSD). Basic and acidic residues-rich tracts occupy residues 15–46 (LLPRDPAATRDPDAARPARRSAVERLAADRAK) and 131–145 (GKDKAPVPRTGDEGK). Over residues 169–181 (APAARSAAPSSVP) the composition is skewed to low complexity. Residue serine 241 is modified to Phosphoserine.

The protein belongs to the FAM110 family. Interacts with AKT1; the interaction is transient and follows AKT1 activation. Interacts with PPP2CA and alpha-tubulin. In terms of tissue distribution, detected in stomach, thyroid, trachea, adrenal gland and testis, and at low levels in prostate, ovary, intestine, colon, spinal cord and lymph node.

The protein localises to the cytoplasm. It localises to the cytoskeleton. The protein resides in the microtubule organizing center. Its subcellular location is the centrosome. It is found in the spindle pole. The protein localises to the nucleus. May play a role in microtubule organization. May play a role in cell spreading and cell migration of epithelial cells; the function may involve the AKT1 signaling pathway. In Homo sapiens (Human), this protein is Protein FAM110C (FAM110C).